Consider the following 211-residue polypeptide: MSHSSGTDMALNFSTASLHAWNGVSLLLIIFVTWIISGMSQAKSKIERLLICWWALTGLIHVFQEGYYVFTPDLFNDNSPNFMAEIWKEYSKGDSRYATRHTSVLGIESVASIVLGPLSLLAAYAVAKQKSYRYIFQFAISIAQLYGTIQYFLTAFLEGDNFASSRYYYYSYYVGQSSIWVIVPMLIATRYWIKIHAICKRLQDKKVTKVG.

The next 5 helical transmembrane spans lie at 16–36 (ASLH…TWII), 50–70 (LICW…YYVF), 104–124 (VLGI…LAAY), 135–155 (IFQF…FLTA), and 179–199 (IWVI…HAIC). The EXPERA domain occupies 46-188 (IERLLICWWA…IWVIVPMLIA (143 aa)).

This sequence belongs to the EBP family. In terms of tissue distribution, expressed in maturing fruits and in juice vesicles.

It is found in the membrane. It carries out the reaction 7,8-epoxymelianol = protoglabretal. It participates in secondary metabolite biosynthesis; terpenoid biosynthesis. Its function is as follows. Isomerase involved in the biosynthesis of glabretanes triterpene natural products such as glabretal, a component with in vitro antiproliferative properties on lymphocytes. Catalyzes the conversion of 7,8-epoxymelianol to protoglabretal via skeletal rearrangements. The protein is Protoglabretal synthase MOI1 of Citrus sinensis (Sweet orange).